We begin with the raw amino-acid sequence, 186 residues long: MSIAEIKKNAEAKMAKSVEAFKNELQKIRTGRAHPGILDQVHVDYYGSNLPLSQVANVTLIDARTISVQPWEKSMAQKIEKAIRESDLGLNPSSMGDLIRVPMPALTEERRKELTKVVRHAGEDSKVAVRNLRRDANDQAKKLLKDKLISEDDERRSVDEVQKLTDRVIAEIDRLVHGKEAEILAV.

It belongs to the RRF family.

The protein localises to the cytoplasm. Functionally, responsible for the release of ribosomes from messenger RNA at the termination of protein biosynthesis. May increase the efficiency of translation by recycling ribosomes from one round of translation to another. The sequence is that of Ribosome-recycling factor from Leptothrix cholodnii (strain ATCC 51168 / LMG 8142 / SP-6) (Leptothrix discophora (strain SP-6)).